We begin with the raw amino-acid sequence, 158 residues long: Endoribonuclease YbeY (158 aa).

Residues His121, His125, and His131 each contribute to the Zn(2+) site.

It belongs to the endoribonuclease YbeY family. Zn(2+) serves as cofactor.

The protein resides in the cytoplasm. Its function is as follows. Single strand-specific metallo-endoribonuclease involved in late-stage 70S ribosome quality control and in maturation of the 3' terminus of the 16S rRNA. In Exiguobacterium sp. (strain ATCC BAA-1283 / AT1b), this protein is Endoribonuclease YbeY.